The chain runs to 184 residues: Cytidylate kinase (184 aa).

ATP is bound at residue 8–16 (GQPGSGKTT).

The protein belongs to the cytidylate kinase family. Type 2 subfamily.

It is found in the cytoplasm. The enzyme catalyses CMP + ATP = CDP + ADP. It catalyses the reaction dCMP + ATP = dCDP + ADP. In Pyrobaculum aerophilum (strain ATCC 51768 / DSM 7523 / JCM 9630 / CIP 104966 / NBRC 100827 / IM2), this protein is Cytidylate kinase.